A 188-amino-acid chain; its full sequence is MAERGSDIRPGQILDHNGSLYLVVKTMHTQPGKGGAYIQAELKNLKTGAKYQERFRSDGYVKRAIVEEVEYQYIFGDGASLTLMNTATYEQVSISADMLGEKGVYLKEGIILTLSFYQGQVVAARVPDYVVLEVVETESVIKGQTASSSYKSAVLENGERISVPPFIKVGERIVVYTVDDTYYERAKD.

This sequence belongs to the elongation factor P family.

Its subcellular location is the cytoplasm. Its pathway is protein biosynthesis; polypeptide chain elongation. Its function is as follows. Involved in peptide bond synthesis. Stimulates efficient translation and peptide-bond synthesis on native or reconstituted 70S ribosomes in vitro. Probably functions indirectly by altering the affinity of the ribosome for aminoacyl-tRNA, thus increasing their reactivity as acceptors for peptidyl transferase. The polypeptide is Elongation factor P (Anaplasma marginale (strain St. Maries)).